The following is a 314-amino-acid chain: Cyclic di-GMP binding protein TDE_0214 (314 aa).

A PilZ domain is found at 146–234; that stretch reads QKRRNERVVI…KTVRTEPVEG (89 aa). A compositionally biased stretch (polar residues) spans 288-300; the sequence is TPVSSPIGTNTAP. The interval 288–314 is disordered; sequence TPVSSPIGTNTAPLTPPPADSAPEQIS.

Its function is as follows. Cyclic-di-GMP binding protein that plays important roles in motility, chemotaxis, biofilm formation and virulence. The protein is Cyclic di-GMP binding protein TDE_0214 of Treponema denticola (strain ATCC 35405 / DSM 14222 / CIP 103919 / JCM 8153 / KCTC 15104).